Here is a 2549-residue protein sequence, read N- to C-terminus: Serine/threonine-protein kinase mTOR (2549 aa).

Met-1 is modified (N-acetylmethionine). An interaction with NBN region spans residues 1–651 (MLGTGPAAAT…HVVSQTAVQV (651 aa)). HEAT repeat units follow at residues 16 to 53 (SSNV…MELR), 55 to 99 (MSQE…VEGG), 100 to 137 (NATR…AMAG), 138 to 179 (DTFT…AISV), 180 to 220 (PTFF…LILT), 222 to 276 (QREP…RISS), 277 to 313 (MEGE…PRHI), 314 to 364 (TPFT…CCRD), 365 to 409 (LMEE…AFTD), 410 to 445 (TQYL…VAVR), 446 to 494 (SEFK…RAMG), 495 to 529 (PGIQ…RQIP), 530 to 563 (QLKK…GLAH), 564 to 596 (QLAS…EFEG), 597 to 636 (HSLT…SIHL), 637 to 683 (ISGH…DERF), 686 to 724 (HLAQ…MNPA), 727 to 766 (MPFL…NAPR), 769 to 811 (RPYM…VSGL), 814 to 853 (RKWV…STGY), 857 to 893 (PYRK…LLGA), 894 to 942 (LDPY…GNLP), 943 to 988 (LDEF…KCVQ), 989 to 1027 (FLPQ…KSHI), 1029 to 1068 (PYMD…GEFK), 1069 to 1105 (LYLP…LFGA), 1106 to 1144 (NLDD…RLTE), 1145 to 1188 (SLDF…GKKY), 1189 to 1225 (QIFI…LADE), 1226 to 1273 (EEDP…GAAR), 1274 to 1311 (RVSK…QAYN), and 1312 to 1345 (PMAR…ELAL). The residue at position 567 (Ser-567) is a Phosphoserine. Thr-1162 is subject to Phosphothreonine. Lys-1218 is modified (N6-acetyllysine). Residue Ser-1261 is modified to Phosphoserine. 16 TPR repeats span residues 1346–1382 (TSQD…GIVL), 1383–1408 (LGER…QKGP), 1409–1442 (TPAI…HFGE), 1443–1473 (LEIQ…NKDD), 1474–1507 (PELM…VNDE), 1508–1541 (TQAK…RDTH), 1542–1574 (DGAF…LDAE), 1575–1614 (LTAM…RREI), 1615–1649 (IRQI…PHED), 1650–1693 (MRTW…PTVH), 1694–1731 (PQVT…AQHA), 1732–1786 (IATE…DRSW), 1787–1846 (YKAW…STEG), 1898–1930 (NNLQ…VKAI), 1931–1970 (QIDT…YHPQ), and 1971–2005 (ALIY…SNTL). Residues 1382–1982 (LLGERAAKCR…IYPLTVASKS (601 aa)) enclose the FAT domain. The 1D-myo-inositol hexakisphosphate site is built by Lys-1662, Lys-1702, and Arg-1749. Residues 1812–1867 (DEKKKLRHASGANITNATTAATTAATATTTASTEGSNSESEAESTENSPTPSPLQK) form a disordered region. Positions 1820 to 1860 (ASGANITNATTAATTAATATTTASTEGSNSESEAESTENSP) are enriched in low complexity. A sufficient for interaction with the FKBP1A/rapamycin complex region spans residues 2012-2144 (VSEELIRVAI…DLELAVPGTY (133 aa)). Lys-2066 is covalently cross-linked (Glycyl lysine isopeptide (Lys-Gly) (interchain with G-Cter in ubiquitin)). The 314-residue stretch at 2156–2469 (IAPSLQVITS…GVELGEPAHK (314 aa)) folds into the PI3K/PI4K catalytic domain. Ser-2159 carries the phosphoserine; by TBK1 modification. Residues 2162–2168 (VITSKQR) form a G-loop region. A Phosphothreonine modification is found at Thr-2164. ATP contacts are provided by Ser-2165 and Gln-2167. Thr-2173 bears the Phosphothreonine; by PKB/AKT1 mark. Leu-2185, Lys-2187, Glu-2190, Tyr-2225, Gly-2238, Trp-2239, Val-2240, and Thr-2245 together coordinate ATP. The segment at 2258–2296 (KILLNIEHRIMLRMAPDYDHLTLMQKVEVFEHAVNNTAG) is interaction with MLST8. The tract at residues 2335–2343 (GLGDRHPSN) is catalytic loop. Position 2343 (Asn-2343) interacts with Mg(2+). ATP contacts are provided by Met-2345 and Ile-2356. An activation loop region spans residues 2355–2380 (HIDFGDCFEVAMTREKFPEKIPFRLT). Position 2357 (Asp-2357) interacts with Mg(2+). Thr-2446 bears the Phosphothreonine; by RPS6KB1 mark. A Phosphoserine; by RPS6KB1 modification is found at Ser-2448. Residue Ser-2478 is modified to Phosphoserine. Ser-2481 carries the phosphoserine; by autocatalysis modification. The FATC domain occupies 2517-2549 (DTLDVPTQVELLIKQATSHENLCQCYIGWCPFW).

The protein belongs to the PI3/PI4-kinase family. Part of the mechanistic target of rapamycin complex 1 (mTORC1) which contains MTOR, MLST8 and RPTOR. The mTORC1 complex is a 1 Md obligate dimer of two stoichiometric heterotetramers with overall dimensions of 290 A x 210 A x 135 A. It has a rhomboid shape and a central cavity, the dimeric interfaces are formed by interlocking interactions between the two MTOR and the two RPTOR subunits. The MLST8 subunit forms distal foot-like protuberances, and contacts only one MTOR within the complex, while the small AKT1S1/PRAS40 localizes to the midsection of the central core, in close proximity to RPTOR. mTORC1 associates with AKT1S1/PRAS40, which inhibits its activity by blocking MTOR substrate-recruitment site. Component of the mechanistic target of rapamycin complex 2 (mTORC2), consisting in two heterotretramers composed of MTOR, MLST8, RICTOR and MAPKAP1/SIN1. Interacts with PLPP7 and PML. Interacts with PRR5 and RICTOR; the interaction is direct within the mTORC2 complex and interaction with RICTOR is enhanced by deubiquitination of RICTOR by USP9X. mTORC1 and mTORC2 associate with DEPTOR, which regulates their activity. Interacts with WAC; WAC positively regulates MTOR activity by promoting the assembly of the TTT complex composed of TELO2, TTI1 and TTI2 and the RUVBL complex composed of RUVBL1 and RUVBL2 into the TTT-RUVBL complex which leads to the dimerization of the mTORC1 complex and its subsequent activation. Interacts with UBQLN1. Interacts with TTI1 and TELO2. Interacts with CLIP1; phosphorylates and regulates CLIP1. Interacts with NBN. Interacts with HTR6. Interacts with BRAT1. Interacts with MEAK7 (via C-terminal domain); the interaction increases upon nutrient stimulation. Interacts with TM4SF5; the interaction is positively regulated by arginine and is negatively regulated by leucine. Interacts with GPR137B. Interacts with NCKAP1L. Interacts with TPCN1 and TPCN2; the interaction is required for TPCN1 and TPCN2 sensitivity to ATP. Interacts with ATP6V1A and with CRYAB, forming a ternary complex. Interacts with SLC38A7; this interaction mediates the recruitment of mTORC1 to the lysosome and its subsequent activation. Interacts with TSPAN8. Autophosphorylates when part of mTORC1 or mTORC2. Phosphorylation at Ser-1261, Ser-2159 and Thr-2164 promotes autophosphorylation. Phosphorylated at Ser-2448 by RPS6KB1. Phosphorylation in the kinase domain modulates the interactions of MTOR with RPTOR and AKT1S1/PRAS40 and leads to increased intrinsic mTORC1 kinase activity. Phosphorylation at Ser-2159 by TBK1 in response to growth factors and pathogen recognition receptors promotes mTORC1 activity. Phosphorylation at Ser-2159 by TBK1 in response to EGF growth factor promotes mTORC2 activity, leading to AKT1 phosphorylation and activation. Phosphorylation at Thr-2173 in the ATP-binding region by AKT1 strongly reduces kinase activity. In terms of processing, ubiquitinated at Lys-2066 by the SCF(FBXO22) complex via 'Lys-27'-linked ubiquitination prevents mTORC1 substrate recruitment. Expressed in numerous tissues, with highest levels in testis.

Its subcellular location is the lysosome membrane. It localises to the endoplasmic reticulum membrane. The protein localises to the golgi apparatus membrane. The protein resides in the cell membrane. It is found in the mitochondrion outer membrane. Its subcellular location is the cytoplasm. It localises to the nucleus. The protein localises to the PML body. The protein resides in the microsome membrane. It is found in the cytoplasmic vesicle. Its subcellular location is the phagosome. The enzyme catalyses L-seryl-[protein] + ATP = O-phospho-L-seryl-[protein] + ADP + H(+). The catalysed reaction is L-threonyl-[protein] + ATP = O-phospho-L-threonyl-[protein] + ADP + H(+). It catalyses the reaction L-tyrosyl-[protein] + ATP = O-phospho-L-tyrosyl-[protein] + ADP + H(+). The mTORC1 complex is activated in response to nutrients, growth factors or amino acids: activation requires relocalization of the mTORC1 complex to lysosomes that is mediated by the Ragulator complex, SLC38A9, and the Rag GTPases RagA/RRAGA, RagB/RRAGB, RagC/RRAGC and RagD/RRAGD. Activation of mTORC1 by growth factors such as insulin involves AKT1-mediated phosphorylation of TSC1-TSC2, which leads to the activation of the RHEB GTPase a potent activator of the protein kinase activity of mTORC1. Insulin-stimulated and amino acid-dependent phosphorylation at Ser-1261 promotes autophosphorylation and the activation of mTORC1. On the other hand, low cellular energy levels can inhibit mTORC1 through activation of PRKAA1 while hypoxia inhibits mTORC1 through a REDD1-dependent mechanism which may also require PRKAA1. The kinase activity of MTOR within the mTORC1 complex is positively regulated by MLST8. The kinase activity of MTOR is inhibited by DEPTOR and AKT1S1. The non-canonical mTORC1 complex is independent of the RHEB GTPase and specifically mediates phosphorylation of MiT/TFE factors TFEB and TFE3 but not other mTORC1 substrates: it is activated by FLCN, which activates Rag GTPases RagC/RRAGC and RagD/RRAGD. MTOR is the target of the immunosuppressive and anti-cancer drug rapamycin which acts in complex with FKBP1A/FKBP12, and specifically inhibits its kinase activity. mTORC2 is also activated by growth factors, but seems to be nutrient-insensitive. mTORC2 associates and is directly activated by ribosomes. mTORC2 may also be regulated by RHEB but in an indirect manner through the PI3K signaling pathway. Functionally, serine/threonine protein kinase which is a central regulator of cellular metabolism, growth and survival in response to hormones, growth factors, nutrients, energy and stress signals. MTOR directly or indirectly regulates the phosphorylation of at least 800 proteins. Functions as part of 2 structurally and functionally distinct signaling complexes mTORC1 and mTORC2 (mTOR complex 1 and 2). In response to nutrients, growth factors or amino acids, mTORC1 is recruited to the lysosome membrane and promotes protein, lipid and nucleotide synthesis by phosphorylating key regulators of mRNA translation and ribosome synthesis. This includes phosphorylation of EIF4EBP1 and release of its inhibition toward the elongation initiation factor 4E (eiF4E). Moreover, phosphorylates and activates RPS6KB1 and RPS6KB2 that promote protein synthesis by modulating the activity of their downstream targets including ribosomal protein S6, eukaryotic translation initiation factor EIF4B, and the inhibitor of translation initiation PDCD4. Stimulates the pyrimidine biosynthesis pathway, both by acute regulation through RPS6KB1-mediated phosphorylation of the biosynthetic enzyme CAD, and delayed regulation, through transcriptional enhancement of the pentose phosphate pathway which produces 5-phosphoribosyl-1-pyrophosphate (PRPP), an allosteric activator of CAD at a later step in synthesis, this function is dependent on the mTORC1 complex. Regulates ribosome synthesis by activating RNA polymerase III-dependent transcription through phosphorylation and inhibition of MAF1 an RNA polymerase III-repressor. Activates dormant ribosomes by mediating phosphorylation of SERBP1, leading to SERBP1 inactivation and reactivation of translation. In parallel to protein synthesis, also regulates lipid synthesis through SREBF1/SREBP1 and LPIN1. To maintain energy homeostasis mTORC1 may also regulate mitochondrial biogenesis through regulation of PPARGC1A. In the same time, mTORC1 inhibits catabolic pathways: negatively regulates autophagy through phosphorylation of ULK1. Under nutrient sufficiency, phosphorylates ULK1 at 'Ser-758', disrupting the interaction with AMPK and preventing activation of ULK1. Also prevents autophagy through phosphorylation of the autophagy inhibitor DAP. Also prevents autophagy by phosphorylating RUBCNL/Pacer under nutrient-rich conditions. Prevents autophagy by mediating phosphorylation of AMBRA1, thereby inhibiting AMBRA1 ability to mediate ubiquitination of ULK1 and interaction between AMBRA1 and PPP2CA. mTORC1 exerts a feedback control on upstream growth factor signaling that includes phosphorylation and activation of GRB10 a INSR-dependent signaling suppressor. Among other potential targets mTORC1 may phosphorylate CLIP1 and regulate microtubules. The mTORC1 complex is inhibited in response to starvation and amino acid depletion. The non-canonical mTORC1 complex, which acts independently of RHEB, specifically mediates phosphorylation of MiT/TFE factors MITF, TFEB and TFE3 in the presence of nutrients, promoting their cytosolic retention and inactivation. Upon starvation or lysosomal stress, inhibition of mTORC1 induces dephosphorylation and nuclear translocation of TFEB and TFE3, promoting their transcription factor activity. The mTORC1 complex regulates pyroptosis in macrophages by promoting GSDMD oligomerization. MTOR phosphorylates RPTOR which in turn inhibits mTORC1. As part of the mTORC2 complex, MTOR transduces signals from growth factors to pathways involved in proliferation, cytoskeletal organization, lipogenesis and anabolic output. In response to growth factors, mTORC2 phosphorylates and activates AGC protein kinase family members, including AKT (AKT1, AKT2 and AKT3), PKC (PRKCA, PRKCB and PRKCE) and SGK1. In contrast to mTORC1, mTORC2 is nutrient-insensitive. mTORC2 plays a critical role in AKT1 activation by mediating phosphorylation of different sites depending on the context, such as 'Thr-450', 'Ser-473', 'Ser-477' or 'Thr-479', facilitating the phosphorylation of the activation loop of AKT1 on 'Thr-308' by PDPK1/PDK1 which is a prerequisite for full activation. mTORC2 also regulates the phosphorylation of SGK1 at 'Ser-422'. mTORC2 may regulate the actin cytoskeleton, through phosphorylation of PRKCA, PXN and activation of the Rho-type guanine nucleotide exchange factors RHOA and RAC1A or RAC1B. The mTORC2 complex also phosphorylates various proteins involved in insulin signaling, such as FBXW8 and IGF2BP1. May also regulate insulin signaling by acting as a tyrosine protein kinase that catalyzes phosphorylation of IGF1R and INSR; additional evidence are however required to confirm this result in vivo. Regulates osteoclastogenesis by adjusting the expression of CEBPB isoforms. Plays an important regulatory role in the circadian clock function; regulates period length and rhythm amplitude of the suprachiasmatic nucleus (SCN) and liver clocks. The polypeptide is Serine/threonine-protein kinase mTOR (Homo sapiens (Human)).